We begin with the raw amino-acid sequence, 166 residues long: Ribosome maturation factor RimP (166 aa).

The protein belongs to the RimP family.

The protein resides in the cytoplasm. In terms of biological role, required for maturation of 30S ribosomal subunits. This is Ribosome maturation factor RimP from Psychrobacter cryohalolentis (strain ATCC BAA-1226 / DSM 17306 / VKM B-2378 / K5).